A 471-amino-acid polypeptide reads, in one-letter code: COP9 signalosome complex subunit 1 (471 aa).

One can recognise a PCI domain in the interval 249–411; it reads CFLLASFDHC…KILYARDVDQ (163 aa). The segment at 445 to 471 is disordered; that stretch reads HVKSPPREGSQGELTPANSQSRMSTNM. Serine 448 and serine 454 each carry phosphoserine. Residues 456 to 471 are compositionally biased toward polar residues; the sequence is GELTPANSQSRMSTNM. Threonine 459 bears the Phosphothreonine mark. Serine 463 is subject to Phosphoserine.

This sequence belongs to the CSN1 family. As to quaternary structure, component of the CSN complex, composed of COPS1/GPS1, COPS2, COPS3, COPS4, COPS5, COPS6, COPS7 (COPS7A or COPS7B), COPS8 and COPS9. In the complex, it probably interacts directly with COPS2, COPS3, COPS4 and COPS5. Interacts directly with inositol kinase ITPK1. Interacts with CAPN8. Interacts with USP48. Interacts with ASB4; this interaction negatively regulates GPS1. Expressed in the base region of the oxyntic and pyloric mucosae.

Its subcellular location is the cytoplasm. The protein resides in the nucleus. Its function is as follows. Essential component of the COP9 signalosome complex (CSN), a complex involved in various cellular and developmental processes. The CSN complex is an essential regulator of the ubiquitin (Ubl) conjugation pathway by mediating the deneddylation of the cullin subunits of SCF-type E3 ligase complexes, leading to decrease the Ubl ligase activity of SCF-type complexes such as SCF, CSA or DDB2. The complex is also involved in phosphorylation of p53/TP53, c-jun/JUN, IkappaBalpha/NFKBIA, ITPK1 and IRF8/ICSBP, possibly via its association with CK2 and PKD kinases. CSN-dependent phosphorylation of TP53 and JUN promotes and protects degradation by the Ubl system, respectively. Suppresses G-protein- and mitogen-activated protein kinase-mediated signal transduction. This chain is COP9 signalosome complex subunit 1 (Gps1), found in Mus musculus (Mouse).